The chain runs to 599 residues: DNA primase (599 aa).

The CHC2-type zinc finger occupies 38–62 (CPFHDEKTPSFTVSEDKQICHCFGC). The Toprim domain maps to 260–341 (DEIVLLEGFM…NVFVIQLPSG (82 aa)). The Mg(2+) site is built by E266, D310, and D312.

The protein belongs to the DnaG primase family. In terms of assembly, monomer. Interacts with DnaB. Zn(2+) serves as cofactor. Mg(2+) is required as a cofactor.

The enzyme catalyses ssDNA + n NTP = ssDNA/pppN(pN)n-1 hybrid + (n-1) diphosphate.. RNA polymerase that catalyzes the synthesis of short RNA molecules used as primers for DNA polymerase during DNA replication. The protein is DNA primase of Staphylococcus aureus (strain COL).